The chain runs to 512 residues: Cytochrome P450 monooxygenase hkm5 (512 aa).

A helical membrane pass occupies residues 18 to 38 (LIQLVRALLWVLVITIGGAIV). Residues Asn-184, Asn-263, Asn-275, Asn-374, and Asn-419 are each glycosylated (N-linked (GlcNAc...) asparagine). Residue Cys-456 participates in heme binding.

Belongs to the cytochrome P450 family. Heme serves as cofactor.

It localises to the membrane. It catalyses the reaction hancockiamide A + reduced [NADPH--hemoprotein reductase] + O2 = hancockiamide G + oxidized [NADPH--hemoprotein reductase] + 2 H2O + H(+). The catalysed reaction is hancockiamide B + reduced [NADPH--hemoprotein reductase] + O2 = hancockiamide C + oxidized [NADPH--hemoprotein reductase] + 2 H2O + H(+). The enzyme catalyses hancockiamide D + reduced [NADPH--hemoprotein reductase] + O2 = hancockiamide H + oxidized [NADPH--hemoprotein reductase] + 2 H2O + H(+). It participates in secondary metabolite biosynthesis. Functionally, cytochrome P450 monooxygenase; part of the gene cluster that mediates the biosynthesis of hancockiamides, an unusual new family of N-cinnamoylated piperazines. The NRPS hkm10 and the NmrA-like reductase hkm9 are proposed to convert two molecules of L-Phe to the intermediary piperazine called xenocockiamide A. Xenocockiamide A is then converted to hancockiamide D via a series of hydroxylations and O-methylations. The tyrosinase hkm6 may catalyze an aromatic hydroxylation, then the 2-oxoglutarate-dependent Fe(II) dioxygenase hkm4 and the FAD-dependent phenol hydroxylase hkm7 may catalyze consecutive hydroxylations to install 2 more hydroxy groups, and the methyltransferase hkm8 probably catalyzes two methylations using 2 molecules of S-adenosyl-L-methionine (SAM). The NRPS hkm11 activates and transfers trans-cinnamate supplied by the PAL hkm12 to hancockiamide D and produces hancockiamide A. NRPS Hkm11 has the flexibility to tolerate the bulky hancockiamide G as a substrate and the absence of the acetyl-transferase hkm3 opens up the opportunity for hkm11 to introduce a second N-cinnamoyl moiety. The cytochrome P450 monooxygenase hkm5 catalyzes the methylenedioxy bridge formation, converting hancockiamide A into hancockiamide G. Hkm5 can also convert hancockiamide B into hancockiamide C, and hancockiamide D into hancockiamide H. The N-acetyltransferase hkm3 finally transfers an acetyl group to 1-N of piperazine, converting hancockiamide A into hancockiamide B and hancockiamide G into hancockiamide C. This Aspergillus hancockii protein is Cytochrome P450 monooxygenase hkm5.